Consider the following 271-residue polypeptide: Autophagy-related protein 27 (271 aa).

The first 19 residues, 1–19, serve as a signal peptide directing secretion; that stretch reads MVSKTWICGFISIITVVQA. One can recognise an MRH domain in the interval 20–166; sequence LSCEKHDVLK…TLKGPSGCLK (147 aa). At 20–199 the chain is on the lumenal side; the sequence is LSCEKHDVLK…PAKKAGGTSW (180 aa). 3 cysteine pairs are disulfide-bonded: cysteine 22–cysteine 60, cysteine 71–cysteine 78, and cysteine 135–cysteine 164. The segment at 161–194 is disordered; the sequence is PSGCLKSKDDDKKNGDGDNGKDGDSEGKKPAKKA. The segment covering 166 to 189 has biased composition (basic and acidic residues); the sequence is KSKDDDKKNGDGDNGKDGDSEGKK. The chain crosses the membrane as a helical span at residues 200 to 220; it reads FTWLFLYALLFTLIYLMVVSF. At 221 to 271 the chain is on the cytoplasmic side; the sequence is LNTRGGSFQDFRAEFIQRSTQFLTSLPEFCKEVVSRILGRSTAQRGGYSAV.

The protein belongs to the ATG27 family. As to quaternary structure, forms a complex with ATG9 and ATG23.

Its subcellular location is the cytoplasmic vesicle membrane. It localises to the golgi apparatus membrane. The protein resides in the mitochondrion membrane. It is found in the preautophagosomal structure membrane. In terms of biological role, effector of VPS34 phosphatidylinositol 3-phosphate kinase signaling. Regulates the cytoplasm to vacuole transport (Cvt) vesicle formation. Plays a role in ATG protein retrieval from the pre-autophagosomal structure (PAS) and is especially required for autophagy-dependent cycling of ATG9. This is Autophagy-related protein 27 (ATG27) from Saccharomyces cerevisiae (strain ATCC 204508 / S288c) (Baker's yeast).